A 677-amino-acid chain; its full sequence is Glutamine--fructose-6-phosphate aminotransferase [isomerizing] 1 (677 aa).

Cys2 acts as the Nucleophile in catalysis. Residues 2–269 (CGIFAYLNFH…DGEVVNLKDG (268 aa)) form the Glutamine amidotransferase type-2 domain. SIS domains follow at residues 353–492 (HLKT…DTIS) and 524–667 (LAQL…VDQP). Substrate-binding positions include 370 to 371 (TS), 415 to 417 (SQS), Thr420, and His571.

Homotetramer, may also exist as homodimers. In terms of tissue distribution, highly expressed in flowers specifically in mature anthers, mature pollen grains and pollen tubes. Barely observed in roots, leaves and stems.

It carries out the reaction D-fructose 6-phosphate + L-glutamine = D-glucosamine 6-phosphate + L-glutamate. It functions in the pathway nucleotide-sugar biosynthesis; UDP-N-acetyl-alpha-D-glucosamine biosynthesis; alpha-D-glucosamine 6-phosphate from D-fructose 6-phosphate: step 1/1. Functionally, controls the flux of glucose into the hexosamine biosynthetic pathway (HBP) leading to glucosamine (GlcN) content homeostasis. Involved in regulating the availability of precursors for N- and O-linked glycosylation of proteins. Required during pollen maturation and pollen tube formation by triggering polar deposition of pectin and callose in the pollen cell wall. Promotes tolerance to tunicamycin (Tm), an inhibitor of proteins N-glycosylation in endoplasmic reticulum (ER). This Arabidopsis thaliana (Mouse-ear cress) protein is Glutamine--fructose-6-phosphate aminotransferase [isomerizing] 1.